The sequence spans 502 residues: DEP domain-containing protein 7 (502 aa).

The region spanning 37-127 (LQTQVEVKKR…SSCSLYRFTT (91 aa)) is the DEP domain.

It belongs to the DEPDC7 family.

This chain is DEP domain-containing protein 7 (DEPDC7), found in Macaca fascicularis (Crab-eating macaque).